A 373-amino-acid chain; its full sequence is Malate dehydrogenase, mitochondrial (373 aa).

NAD(+) contacts are provided by residues 69-75 and Asp-95; that span reads GAAGGIG. Residues Arg-141 and Arg-147 each coordinate substrate. Residues Asn-154 and 177–179 contribute to the NAD(+) site; that span reads ISN. Positions 179 and 213 each coordinate substrate. Residue His-237 is the Proton acceptor of the active site. Met-288 provides a ligand contact to NAD(+).

Belongs to the LDH/MDH superfamily. MDH type 1 family. Homodimer.

It localises to the mitochondrion matrix. The catalysed reaction is (S)-malate + NAD(+) = oxaloacetate + NADH + H(+). This Chlamydomonas reinhardtii (Chlamydomonas smithii) protein is Malate dehydrogenase, mitochondrial.